A 143-amino-acid chain; its full sequence is MTDRLTQLQICLDQMMEQFCGAVNYVDKNHGFEPSNDSEEQMSDPQAHIVEEKEFEKNIDELTTDIILKTRQIMALIDSLPGVDVSAQEQLHRIDSLQKQLIKMEKEKIDAIKRKDALQEKVRTLTQDFTIGINESKTEARLV.

Residues 53–130 (KEFEKNIDEL…KVRTLTQDFT (78 aa)) adopt a coiled-coil conformation.

Belongs to the Mediator complex subunit 21 family. Component of the Mediator complex.

The protein localises to the nucleus. Component of the Mediator complex, a coactivator involved in the regulated transcription of nearly all RNA polymerase II-dependent genes. Mediator functions as a bridge to convey information from gene-specific regulatory proteins to the basal RNA polymerase II transcription machinery. Mediator is recruited to promoters by direct interactions with regulatory proteins and serves as a scaffold for the assembly of a functional preinitiation complex with RNA polymerase II and the general transcription factors. This is Mediator of RNA polymerase II transcription subunit 21 (SRB7) from Kluyveromyces lactis (strain ATCC 8585 / CBS 2359 / DSM 70799 / NBRC 1267 / NRRL Y-1140 / WM37) (Yeast).